A 119-amino-acid polypeptide reads, in one-letter code: Type II secretion system protein I (119 aa).

The propeptide at 1 to 5 is leader sequence; that stretch reads MNARG. Position 6 is an N-methylmethionine (methionine 6). A helical transmembrane segment spans residues 6-26; the sequence is MTLLEVMVALAVFAIAGLAVM.

Belongs to the GSP I family. Type II secretion is composed of four main components: the outer membrane complex, the inner membrane complex, the cytoplasmic secretion ATPase and the periplasm-spanning pseudopilus. Interacts with core component ExeG. Post-translationally, cleaved by prepilin peptidase. Methylated by prepilin peptidase at the amino group of the N-terminal methionine once the leader sequence is cleaved by prepilin peptidase.

The protein localises to the cell inner membrane. Functionally, component of the type II secretion system required for the energy-dependent secretion of extracellular factors such as proteases and toxins from the periplasm. Part of the pseudopilus tip complex that is critical for the recognition and binding of secretion substrates. The polypeptide is Type II secretion system protein I (exeI) (Aeromonas hydrophila).